Consider the following 412-residue polypeptide: MQVYLVGGAVRDYLLGHSYQEKDYVVVGATPEHMLAQGFQPVGKDFPVFLHPETKEEYALARTERKSGQGYHGFQFFTDTTVSLEDDLIRRDLTINAIAMDQDGKIYDPYGGQNDLENKILRHVSEAFAEDPLRVLRVARFAARYFPYGFQIAPETLQLMQTMADSGELDALTPERVWKETSRALMENHADIYFQTLRDCGALKHLFPEIDALFGVPQRPEYHPEVDCGIHTLMSLQQACKSNYSLDVRFAVLVHDLGKALTPAKELPRHIMHEERGIKPVTQLCERLRVPTQTKQLALSVCKEHLKCHQIMSLKPGTLWRLLQRLDVLRRPERVEAFVQACECDAKGRLGLEDRPYPQAQYMREAMQIVRSIKVQDLPENIKGAEIGEMLIQYRIEALAEFKNQHQSLSHS.

Positions 8 and 11 each coordinate ATP. The CTP site is built by G8 and R11. Positions 21 and 23 each coordinate Mg(2+). Residues R91, R137, and R140 each coordinate ATP. R91, R137, and R140 together coordinate CTP. An HD domain is found at 228–329 (CGIHTLMSLQ…WRLLQRLDVL (102 aa)).

It belongs to the tRNA nucleotidyltransferase/poly(A) polymerase family. Bacterial CCA-adding enzyme type 1 subfamily. In terms of assembly, monomer. Can also form homodimers and oligomers. Mg(2+) is required as a cofactor. Requires Ni(2+) as cofactor.

It carries out the reaction a tRNA precursor + 2 CTP + ATP = a tRNA with a 3' CCA end + 3 diphosphate. The enzyme catalyses a tRNA with a 3' CCA end + 2 CTP + ATP = a tRNA with a 3' CCACCA end + 3 diphosphate. Functionally, catalyzes the addition and repair of the essential 3'-terminal CCA sequence in tRNAs without using a nucleic acid template. Adds these three nucleotides in the order of C, C, and A to the tRNA nucleotide-73, using CTP and ATP as substrates and producing inorganic pyrophosphate. tRNA 3'-terminal CCA addition is required both for tRNA processing and repair. Also involved in tRNA surveillance by mediating tandem CCA addition to generate a CCACCA at the 3' terminus of unstable tRNAs. While stable tRNAs receive only 3'-terminal CCA, unstable tRNAs are marked with CCACCA and rapidly degraded. This is Multifunctional CCA protein from Acinetobacter baumannii (strain SDF).